Reading from the N-terminus, the 459-residue chain is MKKLSRTISGVTPVAVMTKPLPCPGKCIYCPTFAATPQSYTPESPAVLRAKSCEYQAYKQVALRLRIIQDMGHPTDKVELIIMGGTFLSADITYQYGFIKDCYDALNGVVAGSLEEAKTINETAQHRCVGLCIETRPDICGKAEIQRMIDFGTTRVELGVQMLDDDIYKLVERGHRVSDVAEATCLLREYGLKVHYHWMPGLPGSSPEKDLALSRMVFEDPRFCPDGLKLYPTMVVEGTILEQWWKEGRYTPYPNGTMTGLIADIKALVPPYVRISRVLRDIPAVFISAGLKDSLRDGVRQILESRHQKCRCIRCREYGHRQRKGQTSGEPTLRRLDYPASGGKEIFLSFEDASDTLYGLLRLRIPCASLPVLGQKYGAKTGLVRELHVYGTELSLGEQGDQSAQHRGLGRKLLAEAECLARDEFGLDSLAILSGVGAREYYRSLGYELVAGYMCKHLD.

The segment at 1–278 (MKKLSRTISG…VPPYVRISRV (278 aa)) is radical S-adenosyl-L-methionine (rSAM). The 266-residue stretch at 6–271 (RTISGVTPVA…IADIKALVPP (266 aa)) folds into the Radical SAM core domain. Cys23, Cys27, and Cys30 together coordinate [4Fe-4S] cluster. Residue Lys77 coordinates acetyl-CoA. The tract at residues 308-459 (QKCRCIRCRE…VAGYMCKHLD (152 aa)) is N-acetyltransferase. The Zn(2+) site is built by Cys310, Cys312, and Cys315. Residues 386-389 (ELHV), 409-411 (LGR), and Tyr442 each bind acetyl-CoA.

This sequence belongs to the ELP3 family. As to quaternary structure, homodimer. [4Fe-4S] cluster serves as cofactor.

It catalyses the reaction uridine(34) in tRNA + acetyl-CoA + S-adenosyl-L-methionine + H2O = 5-(carboxymethyl)uridine(34) in tRNA + 5'-deoxyadenosine + L-methionine + CoA + 2 H(+). It participates in tRNA modification. Its function is as follows. tRNA uridine(34) acetyltransferase, which mediates formation of carboxymethyluridine in the wobble base at position 34 in tRNAs. The proposed mechanism is the following: (i) recruits S-adenosyl-L-methionine and cleaves it to generate a 5'-deoxyadenosine radical (5'-dA) in the radical S-adenosyl-L-methionine (rSAM) region, (ii) hydrolyzes acetyl-CoA in the N-acetyltransferase domain and (iii) an acetyl radical is formed by the products of the two domains and (iv) is transferred onto the C5 position of uridine(34) in the bound tRNA molecule. Does not show protein lysine acetyltransferase activity. This Dehalococcoides mccartyi (strain CBDB1) protein is tRNA uridine(34) acetyltransferase.